The sequence spans 1783 residues: MFSFFKQIFKSLKKFFFLLFGIIFVLFSIIFLETSIVQLSNNLVSTYTTLVSKTNSSDIVAPAILKEANPVYIASLTNDSGYFSKIKIDDKKINYLFPYQENDFGSDSGQSNGSGDNQNKTIPRKGDVNEKDKLFLARKRGILKAYGEANIAEKRIYKGLAVSFNNTDSFNGSDISDSITNRHIISDPQNLIYDASGNLLGYFADGLIKETISLRAGIARFPGDKGKSTGTQVKITQKQQTNNDPQKDSTVNSLYKTNNKDKVWFKSDETKADNTDISANYLFTGGNEAANWFPNLYANIPIDLEIDPGSQFWKDVNPFKEIVEEFQTQKESKDNQSFTLTFNLDISKLNKLDNEQLKWLETNAKTIANNSSFGDWDLENKLKQLKKFELKINKDWLKKKVESEKDTILNSLPGFSDSDKDTIFKTQNGMMVRNNNLSFQPSSNNLQLVQNQNSQASNGIADPNFSNVQTAYNKIHQSNNTPEKTLDAVYAAVLDQWRSIFQEDLVKKTVDLLEKYRDHFLKATAFNNIDYSKQNIAIANNVSSAESASFLVSNKDEQRYNDLSLIDGVDLKSWLFKPEQNESNPLDTIYGGQDANNGFLQKIDYEFKPSTSSGGMTASLKNTQALSPKSTKFPIYPKLANIIAQAQLPEATNIPTTALDALKQWTNLDANGFNNLKEEDKRKAANNYLALLSYFTPAFQDPNELIETNRQMLEIPITVKNGVNPLILPTDQQNLVVQTPEAHGAVVSQQWLFRHNKEILPQEGEYAWKTALQTPNNFPNWLNDLPDRYKFSINGLTFAILGIGESVETGYPVLSLQSPLPNTQDEALIFVNDQAYRSILFAVPAANQENYYAFKSTDLKQHTDQDPVQFIANRLEGYLDVPRSDLAFNVKDISKFNYLTTARNYFPDLVQSYLAIVSTVIAIFLIILALYLIILLIKSFIKKNQTEFSIIRAGGFSTTKFIVGMSVFAGIVAIVSSFLGVLFAFLLEGQVKGIINRYWFIALPENSFNWLSFFGSFFITFFVFEFISWIAFKQLFSKPVNVLIDQGNETKFSVLLHLLKHKSHTMSPLTKFRVSLIVSRFSRLFTYVGLSSVALLLIGIAGTIPQKFSAAQTSTSLNRNFNYKLNLQTPTEQSGWYAIQPYSHFGVTDNNNGIKTLYNESVQANSQNEHPYKPSNLKLKNRQDQPIKAADGTELELGNLLLPSYGGAQQLNTDENFFRHASLSKWIIDFPIRVGGSNINPWEIVEKSIPKQITQLLSASSDQFLISVLTDDFFNNLNANGFLIRNPRTNQIQLDASRVLTTIDVFNPGGVKFNDSFLSFMLKVYGDFELAKQDSKLNFGIVPVDPAIEETYTYVEGPFGFQEDNLDENSPYTLTGINPESSFVNLIDGSGNSLRNLISSDQEMNVIVNAGFQYANNINIGDYVYIKPKNTATRYSEKFLKAPLNNSTVAFKVVGVSTDAFGQELYINQHIANNLLKLSGNQGRGIIRDVIKKTNGQSQSSDEYEIDYVKPNGYVPFNGVFSKELKPSLLNKALVLNSIIGVWGNFTDFGNNFQNLVRNKLDKVITSILPTDPEIINKLAQEKQIINTTSMNYESLRKELVNKYKTEWNSVNLLSQNASSIFGNNIIAPVLNIDAAGTSAQIIRNNAEVLFNTVNQVDAFLLGTIIPFIFITCVVLGISMLEEMKRIFISLKAIGYRDVQNLISLLTFFIPAFVLALLISIGVLAGVLIGIQAVVFNVAQVFLTNVFEFLPYMVGIVLFGVTIFVIGSYFWIKLRSAELKEGF.

The chain crosses the membrane as a helical span at residues 16-36 (FFLLFGIIFVLFSIIFLETSI). Low complexity predominate over residues 105–119 (GSDSGQSNGSGDNQN). Residues 105–125 (GSDSGQSNGSGDNQNKTIPRK) form a disordered region. A run of 8 helical transmembrane segments spans residues 917–937 (VSTVIAIFLIILALYLIILLI), 967–987 (VFAGIVAIVSSFLGVLFAFLL), 1010–1030 (WLSFFGSFFITFFVFEFISWI), 1084–1104 (LFTYVGLSSVALLLIGIAGTI), 1660–1680 (FLLGTIIPFIFITCVVLGISM), 1709–1729 (FIPAFVLALLISIGVLAGVLI), 1730–1750 (GIQAVVFNVAQVFLTNVFEFL), and 1752–1772 (YMVGIVLFGVTIFVIGSYFWI).

This sequence belongs to the ABC-4 integral membrane protein family.

It is found in the cell membrane. This is an uncharacterized protein from Mycoplasma genitalium (strain ATCC 33530 / DSM 19775 / NCTC 10195 / G37) (Mycoplasmoides genitalium).